A 178-amino-acid chain; its full sequence is Large ribosomal subunit protein uL6 (178 aa).

Belongs to the universal ribosomal protein uL6 family. In terms of assembly, part of the 50S ribosomal subunit.

Its function is as follows. This protein binds to the 23S rRNA, and is important in its secondary structure. It is located near the subunit interface in the base of the L7/L12 stalk, and near the tRNA binding site of the peptidyltransferase center. The sequence is that of Large ribosomal subunit protein uL6 from Campylobacter jejuni subsp. doylei (strain ATCC BAA-1458 / RM4099 / 269.97).